Here is a 662-residue protein sequence, read N- to C-terminus: UPF0313 protein CPF_1407 (662 aa).

The Radical SAM core domain maps to 296–567 (AIEEVKFSIV…AMQRALLQFK (272 aa)). [4Fe-4S] cluster-binding residues include C310, C314, and C317. Residues 596–662 (IRDKNSFGKG…QRSSKGKKRR (67 aa)) form a disordered region. The segment covering 618-632 (SRNENSGRRESEDKK) has biased composition (basic and acidic residues). A compositionally biased stretch (basic residues) spans 633 to 644 (RSSHSKKQRGNK).

It belongs to the UPF0313 family. The cofactor is [4Fe-4S] cluster.

In Clostridium perfringens (strain ATCC 13124 / DSM 756 / JCM 1290 / NCIMB 6125 / NCTC 8237 / Type A), this protein is UPF0313 protein CPF_1407.